We begin with the raw amino-acid sequence, 70 residues long: MKARELKELRSSNPQDLTLKLGDLKAELFNLRFQLATGQLENPMRIREVKKSIAQIKTILREDEMRALEQ.

This sequence belongs to the universal ribosomal protein uL29 family.

The protein is Large ribosomal subunit protein uL29 of Clostridium botulinum (strain Eklund 17B / Type B).